A 183-amino-acid polypeptide reads, in one-letter code: Glutathione-regulated potassium-efflux system ancillary protein KefG (183 aa).

Belongs to the NAD(P)H dehydrogenase (quinone) family. KefG subfamily. In terms of assembly, interacts with KefB.

The protein localises to the cell inner membrane. The catalysed reaction is a quinone + NADH + H(+) = a quinol + NAD(+). The enzyme catalyses a quinone + NADPH + H(+) = a quinol + NADP(+). Regulatory subunit of a potassium efflux system that confers protection against electrophiles. Required for full activity of KefB. This is Glutathione-regulated potassium-efflux system ancillary protein KefG from Salmonella enteritidis PT4 (strain P125109).